Reading from the N-terminus, the 389-residue chain is Nicotinate phosphoribosyltransferase (389 aa).

A Phosphohistidine; by autocatalysis modification is found at His216.

It belongs to the NAPRTase family. Post-translationally, transiently phosphorylated on a His residue during the reaction cycle. Phosphorylation strongly increases the affinity for substrates and increases the rate of nicotinate D-ribonucleotide production. Dephosphorylation regenerates the low-affinity form of the enzyme, leading to product release.

The catalysed reaction is nicotinate + 5-phospho-alpha-D-ribose 1-diphosphate + ATP + H2O = nicotinate beta-D-ribonucleotide + ADP + phosphate + diphosphate. It participates in cofactor biosynthesis; NAD(+) biosynthesis; nicotinate D-ribonucleotide from nicotinate: step 1/1. In terms of biological role, catalyzes the synthesis of beta-nicotinate D-ribonucleotide from nicotinate and 5-phospho-D-ribose 1-phosphate at the expense of ATP. The sequence is that of Nicotinate phosphoribosyltransferase from Ralstonia pickettii (strain 12J).